The chain runs to 359 residues: UDP-N-acetylglucosamine--N-acetylmuramyl-(pentapeptide) pyrophosphoryl-undecaprenol N-acetylglucosamine transferase (359 aa).

UDP-N-acetyl-alpha-D-glucosamine contacts are provided by residues 13–15 (TAG), Asn-125, Arg-161, Ser-193, Ile-241, and Gln-285.

The protein belongs to the glycosyltransferase 28 family. MurG subfamily.

Its subcellular location is the cell membrane. The enzyme catalyses di-trans,octa-cis-undecaprenyl diphospho-N-acetyl-alpha-D-muramoyl-L-alanyl-D-glutamyl-meso-2,6-diaminopimeloyl-D-alanyl-D-alanine + UDP-N-acetyl-alpha-D-glucosamine = di-trans,octa-cis-undecaprenyl diphospho-[N-acetyl-alpha-D-glucosaminyl-(1-&gt;4)]-N-acetyl-alpha-D-muramoyl-L-alanyl-D-glutamyl-meso-2,6-diaminopimeloyl-D-alanyl-D-alanine + UDP + H(+). The protein operates within cell wall biogenesis; peptidoglycan biosynthesis. Functionally, cell wall formation. Catalyzes the transfer of a GlcNAc subunit on undecaprenyl-pyrophosphoryl-MurNAc-pentapeptide (lipid intermediate I) to form undecaprenyl-pyrophosphoryl-MurNAc-(pentapeptide)GlcNAc (lipid intermediate II). The polypeptide is UDP-N-acetylglucosamine--N-acetylmuramyl-(pentapeptide) pyrophosphoryl-undecaprenol N-acetylglucosamine transferase (Corynebacterium diphtheriae (strain ATCC 700971 / NCTC 13129 / Biotype gravis)).